The sequence spans 207 residues: Probable RNA 2'-phosphotransferase (207 aa).

Belongs to the KptA/TPT1 family.

Functionally, removes the 2'-phosphate from RNA via an intermediate in which the phosphate is ADP-ribosylated by NAD followed by a presumed transesterification to release the RNA and generate ADP-ribose 1''-2''-cyclic phosphate (APPR&gt;P). May function as an ADP-ribosylase. This is Probable RNA 2'-phosphotransferase from Methanosarcina barkeri (strain Fusaro / DSM 804).